Consider the following 432-residue polypeptide: Enolase (432 aa).

The interval Q41 to Y64 is disordered. Positions E52–Y64 are enriched in basic and acidic residues. Q168 provides a ligand contact to (2R)-2-phosphoglycerate. E211 serves as the catalytic Proton donor. The Mg(2+) site is built by D248, E289, and D316. The (2R)-2-phosphoglycerate site is built by K341, R370, S371, and K392. The active-site Proton acceptor is the K341.

This sequence belongs to the enolase family. Mg(2+) is required as a cofactor.

Its subcellular location is the cytoplasm. The protein resides in the secreted. The protein localises to the cell surface. It catalyses the reaction (2R)-2-phosphoglycerate = phosphoenolpyruvate + H2O. The protein operates within carbohydrate degradation; glycolysis; pyruvate from D-glyceraldehyde 3-phosphate: step 4/5. Functionally, catalyzes the reversible conversion of 2-phosphoglycerate (2-PG) into phosphoenolpyruvate (PEP). It is essential for the degradation of carbohydrates via glycolysis. This is Enolase from Synechocystis sp. (strain ATCC 27184 / PCC 6803 / Kazusa).